The primary structure comprises 378 residues: UPF0754 membrane protein BCAH820_0954 (378 aa).

2 helical membrane passes run M1–T21 and Y357–L377.

Belongs to the UPF0754 family.

The protein localises to the cell membrane. The chain is UPF0754 membrane protein BCAH820_0954 from Bacillus cereus (strain AH820).